We begin with the raw amino-acid sequence, 391 residues long: 3-ketoacyl-CoA thiolase (391 aa).

The Acyl-thioester intermediate role is filled by C95. Active-site proton acceptor residues include H347 and C377.

Belongs to the thiolase-like superfamily. Thiolase family. Heterotetramer of two alpha chains (FadB) and two beta chains (FadA).

It is found in the cytoplasm. The enzyme catalyses an acyl-CoA + acetyl-CoA = a 3-oxoacyl-CoA + CoA. It participates in lipid metabolism; fatty acid beta-oxidation. Catalyzes the final step of fatty acid oxidation in which acetyl-CoA is released and the CoA ester of a fatty acid two carbons shorter is formed. This chain is 3-ketoacyl-CoA thiolase, found in Alcanivorax borkumensis (strain ATCC 700651 / DSM 11573 / NCIMB 13689 / SK2).